Reading from the N-terminus, the 737-residue chain is FYVE, RhoGEF and PH domain-containing protein 3 (737 aa).

Residues 1 to 151 (MESGGGSSTP…KADKDAGLAQ (151 aa)) form a disordered region. Acidic residues predominate over residues 126-136 (ADSDVGEEPDS). Ser128 carries the post-translational modification Phosphoserine. A DH domain is found at 157–341 (KLLHIAQELL…STAANHSNAA (185 aa)). The PH 1 domain maps to 370 to 469 (ELIKEGQIQK…WIQIIQATIE (100 aa)). Residues 487-533 (QDEDPSLSPDMPITSTSPVEPVVTTEGGSGAAGLEPRKLSSKTRRDK) are disordered. A compositionally biased stretch (low complexity) spans 500-512 (TSTSPVEPVVTTE). Basic and acidic residues predominate over residues 521 to 533 (EPRKLSSKTRRDK). The FYVE-type zinc finger occupies 532–588 (DKEKQSCKSCGETFNSITKRRHHCKLCGVVICGKCSEFKAENSRQSRVCRECFLTQP). Zn(2+)-binding residues include Cys538, Cys541, Cys555, Cys558, Cys563, Cys566, Cys580, and Cys583. 2 disordered regions span residues 589-620 (VAPE…SLLC) and 713-737 (AARG…AAAP). Residues 616 to 715 (PSLLCGPLRL…WLETLSTAAR (100 aa)) form the PH 2 domain.

The protein localises to the cytoplasm. Its subcellular location is the cytoskeleton. Promotes the formation of filopodia. May activate CDC42, a member of the Ras-like family of Rho- and Rac proteins, by exchanging bound GDP for free GTP. Plays a role in regulating the actin cytoskeleton and cell shape. This chain is FYVE, RhoGEF and PH domain-containing protein 3 (FGD3), found in Pongo abelii (Sumatran orangutan).